A 515-amino-acid chain; its full sequence is Ribose import ATP-binding protein RbsA 1 (515 aa).

ABC transporter domains are found at residues 8-244 (FQME…IGRE) and 256-503 (VPAT…LNIH). An ATP-binding site is contributed by 40–47 (GENGAGKS).

Belongs to the ABC transporter superfamily. Ribose importer (TC 3.A.1.2.1) family. As to quaternary structure, the complex is composed of an ATP-binding protein (RbsA), two transmembrane proteins (RbsC) and a solute-binding protein (RbsB).

The protein resides in the cell inner membrane. The catalysed reaction is D-ribose(out) + ATP + H2O = D-ribose(in) + ADP + phosphate + H(+). Functionally, part of the ABC transporter complex RbsABC involved in ribose import. Responsible for energy coupling to the transport system. This is Ribose import ATP-binding protein RbsA 1 from Mesorhizobium japonicum (strain LMG 29417 / CECT 9101 / MAFF 303099) (Mesorhizobium loti (strain MAFF 303099)).